Consider the following 833-residue polypeptide: Toll-like receptor 4 (833 aa).

An N-terminal signal peptide occupies residues Met-1–Pro-23. The region spanning Glu-24–Ser-54 is the LRRNT domain. Over Glu-24–Lys-632 the chain is Extracellular. A disulfide bridge connects residues Cys-29 and Cys-40. N-linked (GlcNAc...) asparagine glycosylation occurs at Asn-35. LRR repeat units follow at residues Ser-55–Asn-76, Glu-79–Gly-100, His-103–Gly-124, Ser-127–His-148, and Thr-151–Ser-172. An N-linked (GlcNAc...) asparagine glycan is attached at Asn-173. LRR repeat units follow at residues Asn-176–Val-197, Asn-205–Glu-225, and Lys-227–Asn-236. The N-linked (GlcNAc...) asparagine glycan is linked to Asn-205. Residue Asn-238 is glycosylated (N-linked (GlcNAc...) asparagine). Cys-281 and Cys-306 are disulfide-bonded. Residue Asn-309 is glycosylated (N-linked (GlcNAc...) asparagine). LRR repeat units lie at residues Pro-352 to Glu-373, Ser-374 to Arg-394, Arg-400 to Gly-420, Gln-423 to Leu-444, Asn-448 to Tyr-456, Ser-472 to Leu-495, Asn-497 to Ser-518, Lys-521 to Pro-542, and Ser-545 to Arg-565. Cys-390 and Cys-391 form a disulfide bridge. Asn-497 and Asn-526 each carry an N-linked (GlcNAc...) asparagine glycan. 2 N-linked (GlcNAc...) asparagine glycosylation sites follow: Asn-570 and Asn-575. The LRRCT domain occupies Asn-579 to Val-630. Intrachain disulfides connect Cys-583–Cys-609 and Cys-585–Cys-628. N-linked (GlcNAc...) asparagine glycosylation occurs at Asn-625. A helical transmembrane segment spans residues Thr-633–Tyr-653. The Cytoplasmic segment spans residues Lys-654–Ser-833. A TIR domain is found at Ser-673 to Leu-816.

Belongs to the Toll-like receptor family. As to quaternary structure, belongs to the lipopolysaccharide (LPS) receptor, a multi-protein complex containing at least CD14, LY96 and TLR4. Binding to bacterial LPS leads to homodimerization. Interacts with LY96 via the extracellular domain. Interacts with MYD88 and TIRAP via their respective TIR domains. Interacts with TICAM2. Interacts with NOX4. Interacts with CNPY3 and HSP90B1; this interaction is required for proper folding in the endoplasmic reticulum. Interacts with MAP3K21; this interaction leads to negative regulation of TLR4 signaling. Interacts with CD36, following CD36 stimulation by oxLDL or amyloid-beta 42, and forms a heterodimer with TLR6. The trimeric complex is internalized and triggers inflammatory response. LYN kinase activity facilitates TLR4-TLR6 heterodimerization and signal initiation. Interacts with TICAM1 in response to LPS in a WDFY1-dependent manner. Interacts with WDFY1 in response to LPS. Interacts with SMPDL3B. Interacts with CEACAM1; upon lipopolysaccharide stimulation, forms a complex including TLR4 and the phosphorylated form of SYK and CEACAM1, which in turn, recruits PTPN6 that dephosphorylates SYK, reducing the production of reactive oxygen species (ROS) and lysosome disruption, which in turn, reduces the activity of the inflammasome. Interacts with RFTN1; the interaction occurs in response to lipopolysaccharide stimulation. Interacts with SCIMP; the interaction occurs in response to lipopolysaccharide stimulation and is enhanced by phosphorylation of SCIMP by LYN. This interaction facilitates the phosphorylation of TLR4 by LYN which elicits a selective cytokine response in macrophages. Interacts with TRAF3IP3. Interacts with TREM1; this interaction enhances TLR4-mediated inflammatory response. Interacts with ZG16B/PAUF. Interacts with CD82; this interaction inhibits TLR4-mediated signaling pathway. Phosphorylated on tyrosine residues by LYN after binding lipopolysaccharide. In terms of processing, ubiquitinated by RNF128 via 'Lys-28'-linked polyubiquitin chains, leading to proteasomal degradation.

It is found in the cell membrane. It localises to the early endosome. The protein resides in the cell projection. Its subcellular location is the ruffle. In terms of biological role, transmembrane receptor that functions as a pattern recognition receptor recognizing pathogen- and damage-associated molecular patterns (PAMPs and DAMPs) to induce innate immune responses via downstream signaling pathways. At the plasma membrane, cooperates with LY96 to mediate the innate immune response to bacterial lipopolysaccharide (LPS). Also involved in LPS-independent inflammatory responses triggered by free fatty acids, such as palmitate, and Ni(2+). Mechanistically, acts via MYD88, TIRAP and TRAF6, leading to NF-kappa-B activation, cytokine secretion and the inflammatory response. Alternatively, CD14-mediated TLR4 internalization via endocytosis is associated with the initiation of a MYD88-independent signaling via the TICAM1-TBK1-IRF3 axis leading to type I interferon production. In addition to the secretion of proinflammatory cytokines, initiates the activation of NLRP3 inflammasome and formation of a positive feedback loop between autophagy and NF-kappa-B signaling cascade. In complex with TLR6, promotes inflammation in monocytes/macrophages by associating with TLR6 and the receptor CD86. Upon ligand binding, such as oxLDL or amyloid-beta 42, the TLR4:TLR6 complex is internalized and triggers inflammatory response, leading to NF-kappa-B-dependent production of CXCL1, CXCL2 and CCL9 cytokines, via MYD88 signaling pathway, and CCL5 cytokine, via TICAM1 signaling pathway. In myeloid dendritic cells, vesicular stomatitis virus glycoprotein G but not LPS promotes the activation of IRF7, leading to type I IFN production in a CD14-dependent manner. The sequence is that of Toll-like receptor 4 (TLR4) from Felis catus (Cat).